Reading from the N-terminus, the 235-residue chain is Protein GMH1 homolog (235 aa).

Topologically, residues 1 to 54 (MSRSFRNGFRLLKLSQMDFERAWWDMANLFRAPRRVYRSITLRKQNINRYGRED) are cytoplasmic. The chain crosses the membrane as a helical span at residues 55–75 (FSFIVLFSCMIVISALLWALF). The Lumenal segment spans residues 76-88 (YMNTPKGYVTTIT). Residues 89–109 (FMLFVDFGAVGVIMATMYYFI) traverse the membrane as a helical segment. The Cytoplasmic segment spans residues 110–140 (AKRFLMKSNDTILSSTDYQLEWNYCFDVHCN). The helical transmembrane segment at 141 to 161 (SFFPSFVLLYVIQLFLLPVIT) threads the bilayer. Topologically, residues 162–175 (RDNFISLFMGNTLY) are lumenal. A helical membrane pass occupies residues 176–196 (LVALCYYSYLTFIGYQILPFL). Over 197 to 201 (KNTHA) the chain is Cytoplasmic. A helical membrane pass occupies residues 202-222 (LLLPIPMFFIMWALSLLGFNV). Over 223-235 (PKHVVDVYFGKSA) the chain is Lumenal.

The protein belongs to the unc-50 family.

It is found in the endoplasmic reticulum membrane. Has a role in meiosis. The chain is Protein GMH1 homolog (mug16) from Schizosaccharomyces pombe (strain 972 / ATCC 24843) (Fission yeast).